The sequence spans 308 residues: MGKTLVFGHKNPDTDTICSAIAYADLKNKIGVEAEAVRLGEINGETQFALDFFKQEAPRFIETAANETKQVILVDHNEFQQSVSDIDQVQVTEVIDHHRIANFETSEPLYYRAEPVGCTATILNKMYKENQVKIEKEIAGLLLSAIISDSLLFKSPTCTQQDIDAAHELAEIAGVDPEVYGLDMLKAGADLSQKTVQELITIDAKEFALGNSKVEIAQVNTVDIAEVTARQTDIEAKINEVIAAKGLDLFVLVITDILENDSLALALGAEAAKVEKAFHVTLENNTALLKGVVSRKKQVVPALTDALS.

Mn(2+) is bound by residues His-9, Asp-13, Asp-15, Asp-75, His-97, and Asp-149.

Belongs to the PPase class C family. It depends on Mn(2+) as a cofactor.

The protein localises to the cytoplasm. It carries out the reaction diphosphate + H2O = 2 phosphate + H(+). The protein is Probable manganese-dependent inorganic pyrophosphatase of Bacillus pumilus (strain SAFR-032).